Here is a 424-residue protein sequence, read N- to C-terminus: Probable methyltransferase EP424R (424 aa).

Positions 103-315 (QIVTNAWLKM…TYIVGKNRLR (213 aa)) constitute an Adrift-type SAM-dependent 2'-O-MTase domain. The S-adenosyl-L-methionine site is built by Gly-135 and Asp-228. Lys-268 acts as the Proton acceptor in catalysis.

It localises to the virion. The chain is Probable methyltransferase EP424R from Ornithodoros (relapsing fever ticks).